Here is a 519-residue protein sequence, read N- to C-terminus: Membrane-bound transcription factor site-2 protease (519 aa).

The Cytoplasmic portion of the chain corresponds to 1–3 (MIP). The helical transmembrane segment at 4-24 (VSLVVVVVGGWTVVYLTDLVL) threads the bilayer. Residues 25–74 (KSSVYFKHSYEDWLENNGLSISPFHIRWQTAVFNRAFYSWGRRKARMLYQ) are Lumenal-facing. 2 consecutive transmembrane segments (helical) span residues 75–95 (WFNFGMVFGVIAMFSSFFLLG) and 96–107 (KTLMQTLAQMMA). The Lumenal segment spans residues 108–144 (DSPSSYSSSSSSSSSSSSSSSSSSSSSSSLHNEQVLQ). The interval 115 to 135 (SSSSSSSSSSSSSSSSSSSSS) is disordered. Residues 145–169 (VVVPGINLPVNQLTYFFTAVLISGV) traverse the membrane as a helical segment. Histidine 171 lines the Zn(2+) pocket. The active site involves glutamate 172. 3 helical membrane passes run 174-186 (GHGIAAIREQVRF), 187-209 (NGFGIFLFIIYPGAFVDLFTTHL), and 229-251 (FVLALLGILALVLLPVILLPFYY). Histidine 175 serves as a coordination point for Zn(2+). Residues 252-446 (TGVGVLITEV…LPVVVETFVK (195 aa)) lie on the Lumenal side of the membrane. Residue asparagine 337 is glycosylated (N-linked (GlcNAc...) asparagine). 2 consecutive transmembrane segments (helical) span residues 447 to 464 (YLISLSGALAIVNAVPCF) and 465 to 476 (ALDGQWILNSFL). Residues 477–492 (DATLTSVIGDNDVKDL) are Lumenal-facing. The helical transmembrane segment at 493–513 (IGFFILLGGSVLLAANVTLGL) threads the bilayer. Over 514–519 (WMVTAR) the chain is Cytoplasmic.

This sequence belongs to the peptidase M50A family. Zn(2+) serves as cofactor. Expressed in heart, brain, placenta, lung, liver, muscle, kidney and pancreas.

Its subcellular location is the membrane. The protein resides in the cytoplasm. It is found in the golgi apparatus membrane. The enzyme catalyses Cleaves several transcription factors that are type-2 transmembrane proteins within membrane-spanning domains. Known substrates include sterol regulatory element-binding protein (SREBP) -1, SREBP-2 and forms of the transcriptional activator ATF6. SREBP-2 is cleaved at the site 477-DRSRILL-|-CVLTFLCLSFNPLTSLLQWGGA-505. The residues Asn-Pro, 11 residues distal to the site of cleavage in the membrane-spanning domain, are important for cleavage by S2P endopeptidase. Replacement of either of these residues does not prevent cleavage, but there is no cleavage if both of these residues are replaced.. Functionally, zinc metalloprotease that mediates intramembrane proteolysis of proteins such as ATF6, ATF6B, SREBF1/SREBP1 and SREBF2/SREBP2. Catalyzes the second step in the proteolytic activation of the sterol regulatory element-binding proteins (SREBPs) SREBF1/SREBP1 and SREBF2/SREBP2: cleaves SREBPs within the first transmembrane segment, thereby releasing the N-terminal segment with a portion of the transmembrane segment attached. Mature N-terminal SREBP fragments shuttle to the nucleus and activate gene transcription. Also mediates the second step in the proteolytic activation of the cyclic AMP-dependent transcription factor ATF-6 (ATF6 and ATF6B). Involved in intramembrane proteolysis during bone formation. In astrocytes and osteoblasts, upon DNA damage and ER stress, mediates the second step of the regulated intramembrane proteolytic activation of the transcription factor CREB3L1, leading to the inhibition of cell-cycle progression. This Homo sapiens (Human) protein is Membrane-bound transcription factor site-2 protease.